The primary structure comprises 102 residues: N(4)-acetylcytidine amidohydrolase (102 aa).

Residues 6–92 (TFFGRFEADI…VIKAIYPGLD (87 aa)) form the ASCH domain. Lysine 20 functions as the Proton acceptor in the catalytic mechanism. The active-site Nucleophile is the threonine 23. The active-site Proton donor is the glutamate 73.

It belongs to the N(4)-acetylcytidine amidohydrolase family.

The catalysed reaction is N(4)-acetylcytidine + H2O = cytidine + acetate + H(+). It catalyses the reaction N(4)-acetyl-2'-deoxycytidine + H2O = 2'-deoxycytidine + acetate + H(+). It carries out the reaction N(4)-acetylcytosine + H2O = cytosine + acetate + H(+). In terms of biological role, catalyzes the hydrolysis of N(4)-acetylcytidine (ac4C). This is N(4)-acetylcytidine amidohydrolase from Yersinia pseudotuberculosis serotype O:1b (strain IP 31758).